Reading from the N-terminus, the 262-residue chain is Apolipoprotein A-I-2 (262 aa).

The signal sequence occupies residues 1–18 (MQFLALALTILLAAATQA). The 3 X approximate tandem repeats stretch occupies residues 32–63 (VKVAMMEYMAQVKETAQRSIDHLDDTEYKEYK). A run of 2 repeats spans residues 64–85 (VQLS…ESLA) and 87–107 (YSEA…AEVM). A 10 X approximate tandem repeats region spans residues 64-262 (VQLSQSLDNL…YETISQAMKA (199 aa)). The 3; half-length repeat unit spans residues 108 to 118 (KDVEELRSQLE). Tandem repeats lie at residues 119-140 (PKRA…KRLE), 141-162 (PLIK…VKIE), 163-184 (PVVE…AKLM), 185-206 (PIVE…TLAS), and 207-228 (PYAE…EKVV). One copy of the 9; half-length repeat lies at 229–239 (PLTTDFKGQLG). Repeat unit 10 spans residues 240-262 (PAAEQAKEKLMALYETISQAMKA).

Belongs to the apolipoprotein A1/A4/E family.

It localises to the secreted. Functionally, participates in the reverse transport of cholesterol from tissues to the liver for excretion by promoting cholesterol efflux from tissues and by acting as a cofactor for the lecithin cholesterol acyltransferase (LCAT). The sequence is that of Apolipoprotein A-I-2 from Oncorhynchus mykiss (Rainbow trout).